Reading from the N-terminus, the 139-residue chain is Growth factor (139 aa).

Positions 1-19 are cleaved as a signal peptide; the sequence is MSMKYLMLLFATMIIRSFA. Asparagine 34 carries an N-linked (GlcNAc...) asparagine; by host glycan. The EGF-like domain maps to 41 to 81; it reads AIRLCGPEGDGYCLHGDCIHARDINGMYCRCSHGYTGIRCQ. 3 disulfide bridges follow: cysteine 45/cysteine 58, cysteine 53/cysteine 69, and cysteine 71/cysteine 80. Asparagine 95 carries N-linked (GlcNAc...) asparagine; by host glycosylation.

Belongs to the orthopoxvirus OPG019 family.

The protein resides in the secreted. Functionally, stimulates cellular proliferation (hyperplasia)and mobility around infected cells to promote rapid and efficient spread of infection. In Camelus, this protein is Growth factor (OPG019).